The primary structure comprises 67 residues: DNA-directed RNA polymerase subunit omega (67 aa).

The protein belongs to the RNA polymerase subunit omega family. The RNAP catalytic core consists of 2 alpha, 1 beta, 1 beta' and 1 omega subunit. When a sigma factor is associated with the core the holoenzyme is formed, which can initiate transcription.

The enzyme catalyses RNA(n) + a ribonucleoside 5'-triphosphate = RNA(n+1) + diphosphate. Promotes RNA polymerase assembly. Latches the N- and C-terminal regions of the beta' subunit thereby facilitating its interaction with the beta and alpha subunits. The polypeptide is DNA-directed RNA polymerase subunit omega (Paracidovorax citrulli (strain AAC00-1) (Acidovorax citrulli)).